Here is a 409-residue protein sequence, read N- to C-terminus: FBD-associated F-box protein At4g10400 (409 aa).

An F-box domain is found at 1–47 (MDRISGLPDEVLVKILSFVPTKVAVSTSILSKRWEFLWMWLTKLKFG). Residues 330–379 (SWNQPSIVPECMLSSLQKFTWFKYLGRPQDRDIAVYILKNACRLRTATIK) form the FBD domain.

This is FBD-associated F-box protein At4g10400 from Arabidopsis thaliana (Mouse-ear cress).